A 180-amino-acid chain; its full sequence is Large ribosomal subunit protein uL22 (180 aa).

Disordered regions lie at residues 1-20 (MTKP…CKSR) and 160-180 (PKPA…EISA). Residues 8-20 (KTPSNPEKSCKSR) are compositionally biased toward polar residues.

It belongs to the universal ribosomal protein uL22 family.

This chain is Large ribosomal subunit protein uL22 (rpl17), found in Dictyostelium discoideum (Social amoeba).